We begin with the raw amino-acid sequence, 133 residues long: ATP synthase epsilon chain, chloroplastic (133 aa).

It belongs to the ATPase epsilon chain family. In terms of assembly, F-type ATPases have 2 components, CF(1) - the catalytic core - and CF(0) - the membrane proton channel. CF(1) has five subunits: alpha(3), beta(3), gamma(1), delta(1), epsilon(1). CF(0) has three main subunits: a, b and c.

It is found in the plastid. The protein resides in the chloroplast thylakoid membrane. In terms of biological role, produces ATP from ADP in the presence of a proton gradient across the membrane. In Nicotiana sylvestris (Wood tobacco), this protein is ATP synthase epsilon chain, chloroplastic.